A 315-amino-acid chain; its full sequence is DNA-directed RNA polymerase subunit alpha (315 aa).

The alpha N-terminal domain (alpha-NTD) stretch occupies residues 1–228 (MLEIEKPIIE…EHFKLFMSLT (228 aa)). Residues 245 to 315 (KEKVLEMTVE…LGLALKLTEE (71 aa)) form an alpha C-terminal domain (alpha-CTD) region.

This sequence belongs to the RNA polymerase alpha chain family. In terms of assembly, homodimer. The RNAP catalytic core consists of 2 alpha, 1 beta, 1 beta' and 1 omega subunit. When a sigma factor is associated with the core the holoenzyme is formed, which can initiate transcription.

It carries out the reaction RNA(n) + a ribonucleoside 5'-triphosphate = RNA(n+1) + diphosphate. DNA-dependent RNA polymerase catalyzes the transcription of DNA into RNA using the four ribonucleoside triphosphates as substrates. This is DNA-directed RNA polymerase subunit alpha from Clostridium beijerinckii (strain ATCC 51743 / NCIMB 8052) (Clostridium acetobutylicum).